We begin with the raw amino-acid sequence, 456 residues long: Phosphomethylpyrimidine synthase (456 aa).

Substrate is bound by residues N80, M109, Y139, H175, 195–197 (SRG), 236–239 (DSLR), and E275. H279 contacts Zn(2+). Position 302 (Y302) interacts with substrate. H343 serves as a coordination point for Zn(2+). [4Fe-4S] cluster-binding residues include C423, C426, and C431.

It belongs to the ThiC family. Requires [4Fe-4S] cluster as cofactor.

It catalyses the reaction 5-amino-1-(5-phospho-beta-D-ribosyl)imidazole + S-adenosyl-L-methionine = 4-amino-2-methyl-5-(phosphooxymethyl)pyrimidine + CO + 5'-deoxyadenosine + formate + L-methionine + 3 H(+). The protein operates within cofactor biosynthesis; thiamine diphosphate biosynthesis. Catalyzes the synthesis of the hydroxymethylpyrimidine phosphate (HMP-P) moiety of thiamine from aminoimidazole ribotide (AIR) in a radical S-adenosyl-L-methionine (SAM)-dependent reaction. The polypeptide is Phosphomethylpyrimidine synthase (Synechococcus sp. (strain ATCC 27144 / PCC 6301 / SAUG 1402/1) (Anacystis nidulans)).